A 188-amino-acid chain; its full sequence is MDRVPREEFVPEDVRPDAYYDTPLPIGHNQTISAPSMVAIMCQALDIREGNKVLEIGTGLGYHAAVMAVLAGASGVVYTVERIPELADMARSVLSRLGFDNVKVFLRDGTEGLPDFAPYDRISVAAAAPDVPQPLVDQLKDPGRLVIPVGRYFQQLMLVEKKGGQIITTDKGGVAFVPLLGKYGFKGY.

The active site involves serine 33.

It belongs to the methyltransferase superfamily. L-isoaspartyl/D-aspartyl protein methyltransferase family.

The protein resides in the cytoplasm. The enzyme catalyses [protein]-L-isoaspartate + S-adenosyl-L-methionine = [protein]-L-isoaspartate alpha-methyl ester + S-adenosyl-L-homocysteine. Its function is as follows. Catalyzes the methyl esterification of L-isoaspartyl residues in peptides and proteins that result from spontaneous decomposition of normal L-aspartyl and L-asparaginyl residues. It plays a role in the repair and/or degradation of damaged proteins. This chain is Protein-L-isoaspartate O-methyltransferase, found in Methanocella arvoryzae (strain DSM 22066 / NBRC 105507 / MRE50).